Reading from the N-terminus, the 277-residue chain is Large ribosomal subunit protein uL2c (277 aa).

The segment at 224-257 (VMNPIDHPHGGGEGRAPIGRKKPLTPWGHPALGR) is disordered.

It belongs to the universal ribosomal protein uL2 family. In terms of assembly, part of the 50S ribosomal subunit.

It localises to the plastid. The protein localises to the chloroplast. In Anthoceros angustus (Hornwort), this protein is Large ribosomal subunit protein uL2c (rpl2).